The primary structure comprises 141 residues: Large ribosomal subunit protein uL11 (141 aa).

This sequence belongs to the universal ribosomal protein uL11 family. Part of the ribosomal stalk of the 50S ribosomal subunit. Interacts with L10 and the large rRNA to form the base of the stalk. L10 forms an elongated spine to which L12 dimers bind in a sequential fashion forming a multimeric L10(L12)X complex. Post-translationally, one or more lysine residues are methylated.

Its function is as follows. Forms part of the ribosomal stalk which helps the ribosome interact with GTP-bound translation factors. This Chlamydia caviae (strain ATCC VR-813 / DSM 19441 / 03DC25 / GPIC) (Chlamydophila caviae) protein is Large ribosomal subunit protein uL11.